A 480-amino-acid polypeptide reads, in one-letter code: UDP-glucose 6-dehydrogenase 3 (480 aa).

NAD(+)-binding positions include 8–13 (GAGYVG), Asp33, Arg38, 86–90 (VNTPT), 127–128 (ST), and Glu161. Substrate-binding positions include 157–161 (EFLAE), 216–223 (KLAANAFL), and 256–269 (RIGP…VGFG). The Nucleophile role is filled by Cys272. 272–275 (CFQK) contributes to the NAD(+) binding site. Residue 334–335 (FK) coordinates substrate. Arg342 contributes to the NAD(+) binding site. Arg447 provides a ligand contact to substrate.

It belongs to the UDP-glucose/GDP-mannose dehydrogenase family.

It carries out the reaction UDP-alpha-D-glucose + 2 NAD(+) + H2O = UDP-alpha-D-glucuronate + 2 NADH + 3 H(+). The protein operates within nucleotide-sugar biosynthesis; UDP-alpha-D-glucuronate biosynthesis; UDP-alpha-D-glucuronate from UDP-alpha-D-glucose: step 1/1. Its activity is regulated as follows. Inhibited by UDP-xylose. Its function is as follows. Involved in the biosynthesis of UDP-glucuronic acid (UDP-GlcA), providing nucleotide sugars for cell-wall polymers. Required for the formation of cell wall ingrowths on the outer cell walls of nematode-induced syncytia. The polypeptide is UDP-glucose 6-dehydrogenase 3 (UGD3) (Arabidopsis thaliana (Mouse-ear cress)).